Consider the following 70-residue polypeptide: Translational regulator CsrA (70 aa).

This sequence belongs to the CsrA/RsmA family. As to quaternary structure, homodimer; the beta-strands of each monomer intercalate to form a hydrophobic core, while the alpha-helices form wings that extend away from the core.

The protein resides in the cytoplasm. In terms of biological role, a translational regulator that binds mRNA to regulate translation initiation and/or mRNA stability. Usually binds in the 5'-UTR at or near the Shine-Dalgarno sequence preventing ribosome-binding, thus repressing translation. Its main target seems to be the major flagellin gene, while its function is anatagonized by FliW. The protein is Translational regulator CsrA of Rhodopirellula baltica (strain DSM 10527 / NCIMB 13988 / SH1).